The sequence spans 1013 residues: PHD finger protein 20-like protein 1 (1013 aa).

In terms of domain architecture, Tudor 1 spans 11–71 (ITFEIGARLE…SNRLRPLERP (61 aa)). Residues Lys75 and Lys79 each participate in a glycyl lysine isopeptide (Lys-Gly) (interchain with G-Cter in SUMO2) cross-link. The Tudor 2 domain occupies 85–141 (FDFKAGEEVLARWTDCRYYPAKIEAINKEGTFTVQFYDGVIRCLKRMHIKAMPEDAK). Disordered regions lie at residues 183–206 (AKNK…RDGG), 309–368 (EQAI…TPKS), 389–454 (VINK…QSSV), and 482–511 (VTGS…FANP). Polar residues predominate over residues 315-346 (KPQSQKKNEAVISSSANTQKPALLSSTLSSGK). Residue Ser368 is modified to Phosphoserine. A compositionally biased stretch (basic residues) spans 404–415 (PCKHSERRRRSQ). Ser432 bears the Phosphoserine mark. The span at 443–453 (SISSQNQQQSS) shows a compositional bias: low complexity. Residues 496–505 (ECPREEKEET) are compositionally biased toward basic and acidic residues. Residue Lys530 forms a Glycyl lysine isopeptide (Lys-Gly) (interchain with G-Cter in SUMO2) linkage. Residues 533-565 (KKVKLEEKTSTAFGKRKEKDKEKKEKRDKDHYK) are compositionally biased toward basic and acidic residues. Residues 533 to 585 (KKVKLEEKTSTAFGKRKEKDKEKKEKRDKDHYKPKQKKKKKKKKKSKQHDYSD) are disordered. Residues 566 to 579 (PKQKKKKKKKKKSK) are compositionally biased toward basic residues. The PHD-type zinc finger occupies 681-729 (IVRCICELDEENGFMIQCEECLCWQHSVCMGLLEDSIPEQYICYICRDP). Positions 824 to 852 (RKITPQDRANSEGKECVQNHKEPALRMEE) are enriched in basic and acidic residues. Residues 824–911 (RKITPQDRAN…LLYKNRGVSE (88 aa)) form a disordered region. Over residues 854–878 (YITSEHSYQKPQSFSQDCQSLTDPG) the composition is skewed to polar residues. The span at 879–892 (SSDDDDASSFEEDG) shows a compositional bias: acidic residues. Position 905 is an N6-acetyllysine (Lys905).

As to quaternary structure, interacts with methylated DNMT1 (DNMT1K142me1). Interacts with SOX2.

The protein resides in the nucleus. Is a negative regulator of proteasomal degradation of a set of methylated proteins, including DNMT1 and SOX2. Involved in the maintainance of embryonic stem cells pluripotency, through the regulation of SOX2 levels. In Mus musculus (Mouse), this protein is PHD finger protein 20-like protein 1 (Phf20l1).